A 91-amino-acid polypeptide reads, in one-letter code: Cell division topological specificity factor (91 aa).

The protein belongs to the MinE family.

Prevents the cell division inhibition by proteins MinC and MinD at internal division sites while permitting inhibition at polar sites. This ensures cell division at the proper site by restricting the formation of a division septum at the midpoint of the long axis of the cell. This is Cell division topological specificity factor from Erwinia tasmaniensis (strain DSM 17950 / CFBP 7177 / CIP 109463 / NCPPB 4357 / Et1/99).